Reading from the N-terminus, the 847-residue chain is uncharacterized protein (847 aa).

Positions 116–126 are enriched in polar residues; it reads TGSSELTTSKT. 3 disordered regions span residues 116-153, 208-245, and 361-392; these read TGSSELTTSKTPIDVDTKEQENRLKQKAEAAPKSTPIE, LKNFEDKSPPQAENASSSKKDEPISVECTDETSSRLSP, and DLEKNKESSSASLSTNKLAESPTEADKNSNVI. Residues 128-145 show a composition bias toward basic and acidic residues; sequence IDVDTKEQENRLKQKAEA. The segment covering 368–378 has biased composition (polar residues); the sequence is SSSASLSTNKL.

This is an uncharacterized protein from Caenorhabditis elegans.